The primary structure comprises 378 residues: Protein RecA (378 aa).

79–86 (GPESSGKT) lines the ATP pocket.

It belongs to the RecA family.

It localises to the cytoplasm. Can catalyze the hydrolysis of ATP in the presence of single-stranded DNA, the ATP-dependent uptake of single-stranded DNA by duplex DNA, and the ATP-dependent hybridization of homologous single-stranded DNAs. It interacts with LexA causing its activation and leading to its autocatalytic cleavage. The protein is Protein RecA of Streptococcus pyogenes serotype M2 (strain MGAS10270).